We begin with the raw amino-acid sequence, 218 residues long: dTTP/UTP pyrophosphatase (218 aa).

Asp-69 (proton acceptor) is an active-site residue.

Belongs to the Maf family. YhdE subfamily. Requires a divalent metal cation as cofactor.

The protein resides in the cytoplasm. It carries out the reaction dTTP + H2O = dTMP + diphosphate + H(+). It catalyses the reaction UTP + H2O = UMP + diphosphate + H(+). Nucleoside triphosphate pyrophosphatase that hydrolyzes dTTP and UTP. May have a dual role in cell division arrest and in preventing the incorporation of modified nucleotides into cellular nucleic acids. In Thermomicrobium roseum (strain ATCC 27502 / DSM 5159 / P-2), this protein is dTTP/UTP pyrophosphatase.